Reading from the N-terminus, the 30-residue chain is Snaclec carinactivase-1 regulatory subunit 17 kDa chain (30 aa).

Residues 1–30 (DCLPGWSSHEGHCYKVFNQEMYWADAEKFC) form the C-type lectin domain. Cys-2 and Cys-13 are oxidised to a cystine.

The protein belongs to the snaclec family. As to quaternary structure, heterodimer of a metalloproteinase subunit and a regulatory subunit comprising two polypeptides disulfide-linked (14 kDa and 17 kDa chains). As to expression, expressed by the venom gland.

It is found in the secreted. In terms of biological role, calcium-dependent prothrombin activator. This protein may activate prothrombin via recognition by the regulatory subunit of the calcium ion bound conformation of its gamma-carboxyglutamic acid (GLA) domain, and the subsequent conversion of prothrombin to active thrombin is catalyzed by the catalytic subunit. This chain is Snaclec carinactivase-1 regulatory subunit 17 kDa chain, found in Echis carinatus (Saw-scaled viper).